A 174-amino-acid polypeptide reads, in one-letter code: 3-hydroxydecanoyl-[acyl-carrier-protein] dehydratase (174 aa).

The active site involves His-71.

The protein belongs to the thioester dehydratase family. FabA subfamily. As to quaternary structure, homodimer.

It localises to the cytoplasm. It catalyses the reaction a (3R)-hydroxyacyl-[ACP] = a (2E)-enoyl-[ACP] + H2O. The catalysed reaction is (3R)-hydroxydecanoyl-[ACP] = (2E)-decenoyl-[ACP] + H2O. It carries out the reaction (2E)-decenoyl-[ACP] = (3Z)-decenoyl-[ACP]. Its pathway is lipid metabolism; fatty acid biosynthesis. Necessary for the introduction of cis unsaturation into fatty acids. Catalyzes the dehydration of (3R)-3-hydroxydecanoyl-ACP to E-(2)-decenoyl-ACP and then its isomerization to Z-(3)-decenoyl-ACP. Can catalyze the dehydratase reaction for beta-hydroxyacyl-ACPs with saturated chain lengths up to 16:0, being most active on intermediate chain length. This chain is 3-hydroxydecanoyl-[acyl-carrier-protein] dehydratase, found in Nitrobacter hamburgensis (strain DSM 10229 / NCIMB 13809 / X14).